Consider the following 835-residue polypeptide: Protein translocase subunit SecA (835 aa).

Residues Gln-85, 103 to 107 (GEGKT), and Asp-492 contribute to the ATP site. The tract at residues 788–807 (VQGEAVHPSSDGEEAKKKPV) is disordered. Residues Cys-819, Cys-821, Cys-830, and Cys-831 each contribute to the Zn(2+) site.

Belongs to the SecA family. Monomer and homodimer. Part of the essential Sec protein translocation apparatus which comprises SecA, SecYEG and auxiliary proteins SecDF. Other proteins may also be involved. It depends on Zn(2+) as a cofactor.

Its subcellular location is the cell membrane. The protein localises to the cytoplasm. The enzyme catalyses ATP + H2O + cellular proteinSide 1 = ADP + phosphate + cellular proteinSide 2.. Part of the Sec protein translocase complex. Interacts with the SecYEG preprotein conducting channel. Has a central role in coupling the hydrolysis of ATP to the transfer of proteins into and across the cell membrane, serving as an ATP-driven molecular motor driving the stepwise translocation of polypeptide chains across the membrane. In Bacillus cereus (strain G9842), this protein is Protein translocase subunit SecA.